The chain runs to 510 residues: Probable cytosol aminopeptidase (510 aa).

Mn(2+) is bound by residues Lys-282 and Asp-287. Lys-294 is a catalytic residue. Residues Asp-305, Asp-364, and Glu-366 each coordinate Mn(2+). Arg-368 is a catalytic residue.

This sequence belongs to the peptidase M17 family. Requires Mn(2+) as cofactor.

Its subcellular location is the cytoplasm. The enzyme catalyses Release of an N-terminal amino acid, Xaa-|-Yaa-, in which Xaa is preferably Leu, but may be other amino acids including Pro although not Arg or Lys, and Yaa may be Pro. Amino acid amides and methyl esters are also readily hydrolyzed, but rates on arylamides are exceedingly low.. It catalyses the reaction Release of an N-terminal amino acid, preferentially leucine, but not glutamic or aspartic acids.. Functionally, presumably involved in the processing and regular turnover of intracellular proteins. Catalyzes the removal of unsubstituted N-terminal amino acids from various peptides. In Cupriavidus pinatubonensis (strain JMP 134 / LMG 1197) (Cupriavidus necator (strain JMP 134)), this protein is Probable cytosol aminopeptidase.